A 484-amino-acid chain; its full sequence is tRNA sulfurtransferase (484 aa).

Positions 63 to 167 (QAFGERLACI…RDKLYMVTKR (105 aa)) constitute a THUMP domain. ATP contacts are provided by residues 185–186 (LI), Lys267, Gly289, and Gln298. Cys346 and Cys458 are joined by a disulfide. A Rhodanese domain is found at 406-484 (IETNEVVIDI…GYTNVKVYRP (79 aa)). Cys458 acts as the Cysteine persulfide intermediate in catalysis.

It belongs to the ThiI family.

The protein resides in the cytoplasm. The enzyme catalyses [ThiI sulfur-carrier protein]-S-sulfanyl-L-cysteine + a uridine in tRNA + 2 reduced [2Fe-2S]-[ferredoxin] + ATP + H(+) = [ThiI sulfur-carrier protein]-L-cysteine + a 4-thiouridine in tRNA + 2 oxidized [2Fe-2S]-[ferredoxin] + AMP + diphosphate. It carries out the reaction [ThiS sulfur-carrier protein]-C-terminal Gly-Gly-AMP + S-sulfanyl-L-cysteinyl-[cysteine desulfurase] + AH2 = [ThiS sulfur-carrier protein]-C-terminal-Gly-aminoethanethioate + L-cysteinyl-[cysteine desulfurase] + A + AMP + 2 H(+). The protein operates within cofactor biosynthesis; thiamine diphosphate biosynthesis. Catalyzes the ATP-dependent transfer of a sulfur to tRNA to produce 4-thiouridine in position 8 of tRNAs, which functions as a near-UV photosensor. Also catalyzes the transfer of sulfur to the sulfur carrier protein ThiS, forming ThiS-thiocarboxylate. This is a step in the synthesis of thiazole, in the thiamine biosynthesis pathway. The sulfur is donated as persulfide by IscS. The chain is tRNA sulfurtransferase from Shewanella putrefaciens (strain CN-32 / ATCC BAA-453).